We begin with the raw amino-acid sequence, 270 residues long: ATP synthase subunit a (270 aa).

The next 5 helical transmembrane spans lie at valine 38–tyrosine 58, isoleucine 98–valine 118, aspartate 143–isoleucine 163, leucine 208–tryptophan 228, and alanine 239–valine 259.

The protein belongs to the ATPase A chain family. As to quaternary structure, F-type ATPases have 2 components, CF(1) - the catalytic core - and CF(0) - the membrane proton channel. CF(1) has five subunits: alpha(3), beta(3), gamma(1), delta(1), epsilon(1). CF(0) has three main subunits: a(1), b(2) and c(9-12). The alpha and beta chains form an alternating ring which encloses part of the gamma chain. CF(1) is attached to CF(0) by a central stalk formed by the gamma and epsilon chains, while a peripheral stalk is formed by the delta and b chains.

It localises to the cell inner membrane. In terms of biological role, key component of the proton channel; it plays a direct role in the translocation of protons across the membrane. The protein is ATP synthase subunit a of Vibrio parahaemolyticus serotype O3:K6 (strain RIMD 2210633).